Here is a 297-residue protein sequence, read N- to C-terminus: MRLVVATRGSKLSMLQTEELLAQIKAVEPSIEFEIKIVKTTGDEVQDKPLYQIGVKGIFEKEVNLAVLRGEADVAVHSLKDLPSELSPGLVLAGFSKRAPPFDAVVSTAGYVLETLPRGALVGTSSVRRAEFVKAIRPDVRVEPLRGNVDTRINKILQGKYDAAIMAVAGIYRLYGASPPIKLAVLRPEVLPPPPGQGIVAAVVREADSWLIDLLKKASDPKASLEAIAEREFLKAVGAGCHVAIGGVAFARNDTVEFIAGYASGGRKYIVRVVGDDPVEVGRRAAEEIRKFKDGDV.

The residue at position 241 (Cys-241) is an S-(dipyrrolylmethanemethyl)cysteine.

This sequence belongs to the HMBS family. Requires dipyrromethane as cofactor.

The catalysed reaction is 4 porphobilinogen + H2O = hydroxymethylbilane + 4 NH4(+). It participates in porphyrin-containing compound metabolism; protoporphyrin-IX biosynthesis; coproporphyrinogen-III from 5-aminolevulinate: step 2/4. Functionally, tetrapolymerization of the monopyrrole PBG into the hydroxymethylbilane pre-uroporphyrinogen in several discrete steps. This chain is Probable porphobilinogen deaminase, found in Pyrobaculum arsenaticum (strain DSM 13514 / JCM 11321 / PZ6).